The primary structure comprises 217 residues: 3-demethoxyubiquinol 3-hydroxylase (217 aa).

E66, E96, H99, E148, E180, and H183 together coordinate Fe cation.

The protein belongs to the COQ7 family. Fe cation serves as cofactor.

The protein localises to the cell membrane. It carries out the reaction a 5-methoxy-2-methyl-3-(all-trans-polyprenyl)benzene-1,4-diol + AH2 + O2 = a 3-demethylubiquinol + A + H2O. Its pathway is cofactor biosynthesis; ubiquinone biosynthesis. Its function is as follows. Catalyzes the hydroxylation of 2-nonaprenyl-3-methyl-6-methoxy-1,4-benzoquinol during ubiquinone biosynthesis. The protein is 3-demethoxyubiquinol 3-hydroxylase of Xanthomonas oryzae pv. oryzae (strain MAFF 311018).